A 1132-amino-acid polypeptide reads, in one-letter code: Tyrosine-protein kinase JAK2 (1132 aa).

The interaction with cytokine/interferon/growth hormone receptors stretch occupies residues 1–239 (MGMACLTMTE…RYRFRRFIQQ (239 aa)). The 344-residue stretch at 37–380 (PVLQVYLYHS…GYYRLTADAH (344 aa)) folds into the FERM domain. Position 119 is a phosphotyrosine; by autocatalysis (Tyr-119). Residues Tyr-372 and Tyr-373 each carry the phosphotyrosine modification. The 82-residue stretch at 401 to 482 (HGPISMDFAI…NLKDLLNCYQ (82 aa)) folds into the SH2; atypical domain. A Phosphoserine modification is found at Ser-523. The 265-residue stretch at 545–809 (LIFNESLGQG…AVIRDLNSLF (265 aa)) folds into the Protein kinase 1 domain. Tyr-570 and Tyr-813 each carry phosphotyrosine. Positions 849 to 1124 (LKFLQQLGKG…SFRDLSLRVD (276 aa)) constitute a Protein kinase 2 domain. Residue 855 to 863 (LGKGNFGSV) participates in ATP binding. Tyr-868 is subject to Phosphotyrosine; by autocatalysis. Lys-882 is an ATP binding site. Phosphotyrosine; by autocatalysis occurs at positions 966 and 972. Catalysis depends on Asp-976, which acts as the Proton acceptor. Tyr-1007 and Tyr-1008 each carry phosphotyrosine; by autocatalysis.

It belongs to the protein kinase superfamily. Tyr protein kinase family. JAK subfamily. As to quaternary structure, interacts with IL23R, SKB1 and STAM2. Interacts with EPOR. Interacts with LYN. Interacts with SIRPA. Interacts with SH2B1. Interacts with TEC. Interacts with IFNGR2 (via intracellular domain). Interacts with LEPR (Isoform B). Interacts with HSP90AB1; promotes functional activation in a heat shock-dependent manner. Interacts with STRA6. Interacts with ASB2; the interaction targets JAK2 for Notch-induced proteasomal degradation. Interacts with MPL/TPOR. Requires Mg(2+) as cofactor. Autophosphorylated, leading to regulate its activity. Leptin promotes phosphorylation on tyrosine residues, including phosphorylation on Tyr-813. Autophosphorylation on Tyr-119 in response to EPO down-regulates its kinase activity. Autophosphorylation on Tyr-868, Tyr-966 and Tyr-972 in response to growth hormone (GH) are required for maximal kinase activity. Also phosphorylated by TEC. Phosphorylated on tyrosine residues in response to interferon gamma signaling. Phosphorylated on tyrosine residues in response to a signaling cascade that is activated by increased cellular retinol. Post-translationally, undergoes Notch-induced ubiquitination and subsequent proteasomal degradation which is mediated by ASB1 or ASB2, the substrate-recognition components of probable ECS E3 ubiquitin-protein ligase complexes. In terms of tissue distribution, ubiquitously expressed throughout most tissues.

It localises to the endomembrane system. Its subcellular location is the cytoplasm. The protein resides in the nucleus. It catalyses the reaction L-tyrosyl-[protein] + ATP = O-phospho-L-tyrosyl-[protein] + ADP + H(+). Regulated by autophosphorylation, can both activate or decrease activity. Heme regulates its activity by enhancing the phosphorylation on Tyr-1007 and Tyr-1008. Non-receptor tyrosine kinase involved in various processes such as cell growth, development, differentiation or histone modifications. Mediates essential signaling events in both innate and adaptive immunity. In the cytoplasm, plays a pivotal role in signal transduction via its association with type I receptors such as growth hormone (GHR), prolactin (PRLR), leptin (LEPR), erythropoietin (EPOR), thrombopoietin receptor (MPL/TPOR); or type II receptors including IFN-alpha, IFN-beta, IFN-gamma and multiple interleukins. Following ligand-binding to cell surface receptors, phosphorylates specific tyrosine residues on the cytoplasmic tails of the receptor, creating docking sites for STATs proteins. Subsequently, phosphorylates the STATs proteins once they are recruited to the receptor. Phosphorylated STATs then form homodimer or heterodimers and translocate to the nucleus to activate gene transcription. For example, cell stimulation with erythropoietin (EPO) during erythropoiesis leads to JAK2 autophosphorylation, activation, and its association with erythropoietin receptor (EPOR) that becomes phosphorylated in its cytoplasmic domain. Then, STAT5 (STAT5A or STAT5B) is recruited, phosphorylated and activated by JAK2. Once activated, dimerized STAT5 translocates into the nucleus and promotes the transcription of several essential genes involved in the modulation of erythropoiesis. Part of a signaling cascade that is activated by increased cellular retinol and that leads to the activation of STAT5 (STAT5A or STAT5B). In addition, JAK2 mediates angiotensin-2-induced ARHGEF1 phosphorylation. Plays a role in cell cycle by phosphorylating CDKN1B. Cooperates with TEC through reciprocal phosphorylation to mediate cytokine-driven activation of FOS transcription. In the nucleus, plays a key role in chromatin by specifically mediating phosphorylation of 'Tyr-41' of histone H3 (H3Y41ph), a specific tag that promotes exclusion of CBX5 (HP1 alpha) from chromatin. Up-regulates the potassium voltage-gated channel activity of KCNA3. This Mus musculus (Mouse) protein is Tyrosine-protein kinase JAK2.